A 253-amino-acid polypeptide reads, in one-letter code: Sulfate transporter CysZ (253 aa).

A run of 4 helical transmembrane segments spans residues 31 to 51 (FVILPLLVNILLMGGAFWWLF), 75 to 95 (LLWPLAVISVLLVFGYFFSTI), 151 to 171 (IVLLILYFIPGIGQTVAPVLW), and 222 to 242 (IPLLNLFIMPVAVCGATAMWV).

Belongs to the CysZ family.

The protein resides in the cell inner membrane. Its function is as follows. High affinity, high specificity proton-dependent sulfate transporter, which mediates sulfate uptake. Provides the sulfur source for the cysteine synthesis pathway. The protein is Sulfate transporter CysZ of Shigella flexneri.